The primary structure comprises 393 residues: S-adenosylmethionine synthase (393 aa).

His17 contacts ATP. Residue Asp19 participates in Mg(2+) binding. Position 45 (Glu45) interacts with K(+). The L-methionine site is built by Glu58 and Gln106. A flexible loop region spans residues 106–116 (QSAHIAQGVDA). ATP is bound by residues 171–173 (DAK), 237–238 (KF), Asp246, 252–253 (RK), Ala269, and Lys273. Residue Asp246 coordinates L-methionine. Lys277 contributes to the L-methionine binding site.

It belongs to the AdoMet synthase family. Homotetramer; dimer of dimers. It depends on Mg(2+) as a cofactor. K(+) is required as a cofactor.

It is found in the cytoplasm. It catalyses the reaction L-methionine + ATP + H2O = S-adenosyl-L-methionine + phosphate + diphosphate. It functions in the pathway amino-acid biosynthesis; S-adenosyl-L-methionine biosynthesis; S-adenosyl-L-methionine from L-methionine: step 1/1. Its function is as follows. Catalyzes the formation of S-adenosylmethionine (AdoMet) from methionine and ATP. The overall synthetic reaction is composed of two sequential steps, AdoMet formation and the subsequent tripolyphosphate hydrolysis which occurs prior to release of AdoMet from the enzyme. In Jannaschia sp. (strain CCS1), this protein is S-adenosylmethionine synthase.